Reading from the N-terminus, the 500-residue chain is Glutamyl-tRNA(Gln) amidotransferase subunit A (500 aa).

Residues K81 and S161 each act as charge relay system in the active site. S185 functions as the Acyl-ester intermediate in the catalytic mechanism.

It belongs to the amidase family. GatA subfamily. In terms of assembly, heterotrimer of A, B and C subunits.

It catalyses the reaction L-glutamyl-tRNA(Gln) + L-glutamine + ATP + H2O = L-glutaminyl-tRNA(Gln) + L-glutamate + ADP + phosphate + H(+). Allows the formation of correctly charged Gln-tRNA(Gln) through the transamidation of misacylated Glu-tRNA(Gln) in organisms which lack glutaminyl-tRNA synthetase. The reaction takes place in the presence of glutamine and ATP through an activated gamma-phospho-Glu-tRNA(Gln). This Rhodospirillum rubrum (strain ATCC 11170 / ATH 1.1.1 / DSM 467 / LMG 4362 / NCIMB 8255 / S1) protein is Glutamyl-tRNA(Gln) amidotransferase subunit A.